The chain runs to 458 residues: Transcription termination factor Rho (458 aa).

Positions 1–23 (MNTTNKESTAELNNTESNNNYNN) are disordered. Residues 10–23 (AELNNTESNNNYNN) show a composition bias toward low complexity. Positions 78 to 153 (LIVGEGVLEV…LKVNRVNFED (76 aa)) constitute a Rho RNA-BD domain. ATP is bound by residues 201–206 (GKGQRA), 213–218 (RTGKTV), and Arg244.

The protein belongs to the Rho family. Homohexamer. The homohexamer assembles into an open ring structure.

Its function is as follows. Facilitates transcription termination by a mechanism that involves Rho binding to the nascent RNA, activation of Rho's RNA-dependent ATPase activity, and release of the mRNA from the DNA template. In Rickettsia conorii (strain ATCC VR-613 / Malish 7), this protein is Transcription termination factor Rho.